Consider the following 122-residue polypeptide: Small ribosomal subunit protein uS12c (122 aa).

The protein belongs to the universal ribosomal protein uS12 family. As to quaternary structure, part of the 30S ribosomal subunit.

The protein localises to the plastid. Its subcellular location is the chloroplast. In terms of biological role, with S4 and S5 plays an important role in translational accuracy. Located at the interface of the 30S and 50S subunits. This chain is Small ribosomal subunit protein uS12c (rps12), found in Cyanidioschyzon merolae (strain NIES-3377 / 10D) (Unicellular red alga).